Here is a 93-residue protein sequence, read N- to C-terminus: Co-chaperonin GroES 2 (93 aa).

Residues 1–20 form a disordered region; it reads MQPLGERIVVQREESETTTA.

It belongs to the GroES chaperonin family. Heptamer of 7 subunits arranged in a ring. Interacts with the chaperonin GroEL.

The protein resides in the cytoplasm. In terms of biological role, together with the chaperonin GroEL, plays an essential role in assisting protein folding. The GroEL-GroES system forms a nano-cage that allows encapsulation of the non-native substrate proteins and provides a physical environment optimized to promote and accelerate protein folding. GroES binds to the apical surface of the GroEL ring, thereby capping the opening of the GroEL channel. The chain is Co-chaperonin GroES 2 from Rhodopirellula baltica (strain DSM 10527 / NCIMB 13988 / SH1).